The chain runs to 293 residues: Formamidopyrimidine-DNA glycosylase (293 aa).

The Schiff-base intermediate with DNA role is filled by Pro-2. The active-site Proton donor is the Glu-3. Catalysis depends on Lys-60, which acts as the Proton donor; for beta-elimination activity. DNA-binding residues include His-110, Arg-129, and Arg-174. The FPG-type zinc finger occupies 259 to 293; the sequence is NVYRRTGKECRKCGNLIEKQKIAGRSTHWCPNCQK. Catalysis depends on Arg-283, which acts as the Proton donor; for delta-elimination activity.

Belongs to the FPG family. Monomer. Requires Zn(2+) as cofactor.

It carries out the reaction Hydrolysis of DNA containing ring-opened 7-methylguanine residues, releasing 2,6-diamino-4-hydroxy-5-(N-methyl)formamidopyrimidine.. The enzyme catalyses 2'-deoxyribonucleotide-(2'-deoxyribose 5'-phosphate)-2'-deoxyribonucleotide-DNA = a 3'-end 2'-deoxyribonucleotide-(2,3-dehydro-2,3-deoxyribose 5'-phosphate)-DNA + a 5'-end 5'-phospho-2'-deoxyribonucleoside-DNA + H(+). Functionally, involved in base excision repair of DNA damaged by oxidation or by mutagenic agents. Acts as a DNA glycosylase that recognizes and removes damaged bases. Has a preference for oxidized purines, such as 7,8-dihydro-8-oxoguanine (8-oxoG). Has AP (apurinic/apyrimidinic) lyase activity and introduces nicks in the DNA strand. Cleaves the DNA backbone by beta-delta elimination to generate a single-strand break at the site of the removed base with both 3'- and 5'-phosphates. The polypeptide is Formamidopyrimidine-DNA glycosylase (Prochlorococcus marinus (strain MIT 9312)).